The following is a 122-amino-acid chain: Large ribosomal subunit protein bL12 (122 aa).

The protein belongs to the bacterial ribosomal protein bL12 family. Homodimer. Part of the ribosomal stalk of the 50S ribosomal subunit. Forms a multimeric L10(L12)X complex, where L10 forms an elongated spine to which 2 to 4 L12 dimers bind in a sequential fashion. Binds GTP-bound translation factors.

Functionally, forms part of the ribosomal stalk which helps the ribosome interact with GTP-bound translation factors. Is thus essential for accurate translation. In Cronobacter sakazakii (strain ATCC BAA-894) (Enterobacter sakazakii), this protein is Large ribosomal subunit protein bL12.